The chain runs to 873 residues: MTDSDEDALKVDQGPSRDIPKPWVIPAPKGILQHIFGTSHVFQSICDVKPKVTGLTVPLKVREYYSRGQQCLEQADWETAVLLFSRALHLDPQLVDFYALRAEAYLQLCDFSSAAQNLRRAYSLQQDNCKHLERLTFVLYLQGQCLFEQCAFLDALNVFSHAAELQPEKPCFRYRCMACLLALKQHQACLTLITNELKQDTTNADVYIFRARLYNFLQKPHLCYRDLHSALLLNPKHPQARMLLQKMVAQAQQARQDAGILAVQGKLQHALQRINRAIENNPLDPSLFLFRGTMYRRLQEFDGAVEDFLKVLDMVTEDQEDMVRQAQRQLLLTYNDFAVHCYRQGAYQEGVLLLNKALRDEQQEKGLYINRGDCFFQLGNLAFAEADYQQALALSPQDEGANTRMGLLQEKMGFCEQRRKQFQKAENHFSTAIRHNPQKAQYYLYRAKSRQLLQNIFGARQDVATVLLLNPKQPKLSLLMTNLFPGMSVEEVLSTQIAHLARLQLEQMVEGSLQAGSPQGIVGMLKRHELERQKALALQHSWKQGEPLIATSEELKATPEIPQVKPGSSEGEAEAPEEEEEKEKEKKEEKKSELIPSKVASLSDSYLDQTSSASSMSFRTTGTSETEMSAICQEYRSTSATAVTFSDSSLLKTQSSDSGNNREALSHGPRKIKATQGQRQSLSKTEPTQSQRRNSSKTKATIHKRNSSKTKATQSQRRNSSKTRATQGQGQSSSKTEATQGQRQSSSEIEATQGPRQEPSKTKTTRSPRQRPRKVKAARGRSWRPSKVDATQGRSRGLLRSSTKTEAFYDSNWSLSKTEYAQGQGQRSSKAEGAQGKSQGMSSTSSKAESTWGPSPSLSKTEVDQDLTYYEAV.

Residues Met-1–Pro-20 form a disordered region. TPR repeat units follow at residues Val-61–Leu-94, Asp-96–Asn-128, Thr-136–Lys-169, Ala-251–Asp-284, Pro-285–Asp-318, Leu-331–Glu-364, Lys-365–Asp-398, and Gly-406–Lys-439. 2 disordered regions span residues Glu-553 to Thr-626 and Ser-639 to Val-873. The segment covering Gly-571–Lys-582 has biased composition (acidic residues). A compositionally biased stretch (basic and acidic residues) spans Glu-583–Glu-593. Composition is skewed to polar residues over residues Ala-600–Thr-626, Ser-639–Glu-663, and Thr-675–Arg-693. A compositionally biased stretch (basic residues) spans Asn-694–Ser-708. Residues Lys-709–Glu-750 show a composition bias toward polar residues. Positions Lys-763–Arg-784 are enriched in basic residues. Composition is skewed to polar residues over residues Arg-800–Ser-828 and Gly-836–Lys-860.

This is Tetratricopeptide repeat protein 16 (TTC16) from Homo sapiens (Human).